We begin with the raw amino-acid sequence, 1049 residues long: Cellulose synthase A catalytic subunit 4 [UDP-forming] (1049 aa).

The Cytoplasmic segment spans residues 1 to 215 (MEPNTMASFD…ISSSKISPYR (215 aa)). Zn(2+) contacts are provided by cysteine 23, cysteine 26, cysteine 42, cysteine 45, cysteine 50, cysteine 53, cysteine 65, and cysteine 68. The RING-type; degenerate zinc-finger motif lies at 23–69 (CKVCGDEVKDDDNGQTFVACHVCVYPVCKPCYEYERSNGNKCCPQCN). Residues 76–98 (KGSPKIAGDEENNGPDDSDDELN) are disordered. Acidic residues predominate over residues 84–96 (DEENNGPDDSDDE). Serine 135 carries the phosphoserine modification. Residues 216-236 (IVIVLRLVILVFFFRFRILTP) traverse the membrane as a helical segment. Topologically, residues 237-239 (AKD) are extracellular. Residues 240–260 (AYPLWLISVICEIWFALSWIL) form a helical membrane-spanning segment. At 261 to 831 (DQFPKWFPIN…INTIVYPFTS (571 aa)) the chain is on the cytoplasmic side. UDP-alpha-D-glucose-binding residues include serine 299, lysine 305, glutamate 306, and aspartate 335. The active site involves aspartate 335. Residues 389 to 416 (VKDRRAMKREYEEFKVRINALVAKAQKK) are a coiled coil. Residue lysine 476 participates in UDP-alpha-D-glucose binding. Mn(2+) contacts are provided by lysine 477 and aspartate 501. The active site involves aspartate 748. The chain crosses the membrane as a helical span at residues 832–852 (IPLLAYCTIPAVCLLTGKFII). Residues 853-857 (PTINN) are Extracellular-facing. A helical transmembrane segment spans residues 858–878 (FASIWFLALFLSIIATAILEL). Over 879 to 895 (RWSGVSINDLWRNEQFW) the chain is Cytoplasmic. The helical transmembrane segment at 896-916 (VIGGVSAHLFAVFQGLLKVLF) threads the bilayer. The Extracellular portion of the chain corresponds to 917–945 (GVDTNFTVTSKGASDEADEFGDLYLFKWT). Asparagine 921 carries an N-linked (GlcNAc...) asparagine glycan. A helical membrane pass occupies residues 946-966 (TLLIPPTTLIILNMVGVVAGV). Topologically, residues 967-977 (SDAINNGYGSW) are cytoplasmic. The helical transmembrane segment at 978 to 998 (GPLFGKLFFAFWVIVHLYPFL) threads the bilayer. Over 999 to 1007 (KGLMGRQNR) the chain is Extracellular. Residues 1008–1028 (TPTIVVLWSILLASIFSLVWV) form a helical membrane-spanning segment. Topologically, residues 1029–1049 (RIDPFLPKQTGPLLKQCGVDC) are cytoplasmic.

The protein belongs to the glycosyltransferase 2 family. Plant cellulose synthase subfamily. Interacts with CESA7 and CESA8. Assembly with CESA7 and CESA8 is required for functional complex and localization in secondary cell wall deposition sites. Interacts with STL1 and STL2, but not with GOT1. Requires Zn(2+) as cofactor. The cofactor is Mn(2+). Post-translationally, S-acylated. Confined to secondary cell wall developing tissues such as xylems and interfascicular regions. Expressed in roots, hypocotyls, leaves, inflorescences and flowers.

Its subcellular location is the cell membrane. The catalysed reaction is [(1-&gt;4)-beta-D-glucosyl](n) + UDP-alpha-D-glucose = [(1-&gt;4)-beta-D-glucosyl](n+1) + UDP + H(+). It functions in the pathway glycan metabolism; plant cellulose biosynthesis. Functionally, catalytic subunit of cellulose synthase terminal complexes ('rosettes'), required for beta-1,4-glucan microfibril crystallization, a major mechanism of the cell wall formation. Involved in the secondary cell wall formation. Required for the xylem cell wall thickening. In Arabidopsis thaliana (Mouse-ear cress), this protein is Cellulose synthase A catalytic subunit 4 [UDP-forming].